Consider the following 548-residue polypeptide: Biotin-dependent acetyl-/propionyl-coenzyme A carboxylase beta5 subunit (548 aa).

Positions 1 to 23 (MTSVTDRSAHSAERSTEHTIDIH) are disordered. Basic and acidic residues predominate over residues 7 to 21 (RSAHSAERSTEHTID). The CoA carboxyltransferase N-terminal domain maps to 25 to 281 (TAGKLAELHK…NNSTDAPRYQ (257 aa)). Positions 295–541 (DEDLELDTLI…ERKIAQLPPK (247 aa)) constitute a CoA carboxyltransferase C-terminal domain.

It belongs to the AccD/PCCB family. As to quaternary structure, forms homohexamers. The biotin-dependent acyl-CoA carboxylase complex is composed of AccA3, which contains the biotin carboxylase (BC) and biotin carboxyl carrier protein (BCCP) domains, and AccD5, which contains the carboxyl transferase (CT) domain. The AccA3/AccD5 complex forms a dodecamer, and can associate with the epsilon subunit AccE5 (Rv3280), which stimulates carboxylation by the complex. Is also part of the long-chain acyl-CoA carboxylase (LCC) complex, which is composed of AccA3, AccD4, AccD5 and AccE5. The four subunits are essential for activity, but AccD5, together with AccE5, probably plays a structural role rather than a catalytic one.

It catalyses the reaction N(6)-carboxybiotinyl-L-lysyl-[protein] + acetyl-CoA = N(6)-biotinyl-L-lysyl-[protein] + malonyl-CoA. It carries out the reaction N(6)-carboxybiotinyl-L-lysyl-[protein] + propanoyl-CoA = methylmalonyl-CoA + N(6)-biotinyl-L-lysyl-[protein]. It functions in the pathway lipid metabolism; mycolic acid biosynthesis. With respect to regulation, carboxylase activity of the AccA3/AccD5 complex is stimulated by interaction with AccE5. Functionally, component of a biotin-dependent acyl-CoA carboxylase complex. This subunit transfers the CO2 from carboxybiotin to the CoA ester substrate. When associated with the alpha3 subunit AccA3, is involved in the carboxylation of acetyl-CoA and propionyl-CoA, with a preference for propionyl-CoA. Is also required for the activity of the long-chain acyl-CoA carboxylase (LCC) complex. In Mycobacterium tuberculosis (strain ATCC 25618 / H37Rv), this protein is Biotin-dependent acetyl-/propionyl-coenzyme A carboxylase beta5 subunit.